The chain runs to 438 residues: MGSSRADLLLVNGMVLTLDPDGRRFDPGAVAILNGEIAAVGPAERLAADFRATRTLDVGGCVVLPGLINAHTHAAMTLFRGLADDLPLMEWLQQHIFPAEAKLTEDWVYWGTMLACAEMIRSGTTTFCDMYLFEHKVAEAARAAGMRAVVGEVLYDFPSPHYGPIENGLRFTESLIERWKEDPLIRIAVEPHAPYTCSPSLLTRCNDIALRHRVPLIIHLSENEAEVEQVLSRYGRRPVAHLEEIGLLGPHLVADHCVALDERDLELLGERGVHVVHNPESNMKLASGIAPVPKLLERGVNVALGTDGCASNNNLDLFGEMDTCAKLHKAATLDPTAMPAETVLRMATAGGARALGMGGRIGELSVGRLADLIVVDFRKPHLVPVYNPISHLVYAARSSDVRHAVIHGRLVMEDRRLLTMNVDEVMERVRYIARTIKP.

Zn(2+)-binding residues include histidine 71 and histidine 73. Substrate-binding residues include glutamate 100 and histidine 192. Histidine 219 lines the Zn(2+) pocket. Substrate is bound by residues glutamate 222 and aspartate 307. Aspartate 307 provides a ligand contact to Zn(2+).

It belongs to the metallo-dependent hydrolases superfamily. MTA/SAH deaminase family. Zn(2+) serves as cofactor.

It catalyses the reaction S-adenosyl-L-homocysteine + H2O + H(+) = S-inosyl-L-homocysteine + NH4(+). The catalysed reaction is S-methyl-5'-thioadenosine + H2O + H(+) = S-methyl-5'-thioinosine + NH4(+). Its function is as follows. Catalyzes the deamination of 5-methylthioadenosine and S-adenosyl-L-homocysteine into 5-methylthioinosine and S-inosyl-L-homocysteine, respectively. Is also able to deaminate adenosine. In Syntrophobacter fumaroxidans (strain DSM 10017 / MPOB), this protein is 5-methylthioadenosine/S-adenosylhomocysteine deaminase.